A 1036-amino-acid chain; its full sequence is Cysteine-rich motor neuron 1 protein (1036 aa).

Residues 1 to 34 form the signal peptide; sequence MYLVAGDRGLAGCGHLLVSLLGLLLLLARSGTRA. Residues 35-112 form the IGFBP N-terminal domain; sequence LVCLPCDESK…EYEAGVCEDE (78 aa). Residues 35 to 939 lie on the Extracellular side of the membrane; it reads LVCLPCDESK…HPSEDSSLDS (905 aa). 4 cysteine pairs are disulfide-bonded: Cys37-Cys60, Cys40-Cys62, Cys45-Cys63, and Cys51-Cys66. An N-linked (GlcNAc...) asparagine glycan is attached at Asn71. Cystine bridges form between Cys74-Cys90 and Cys84-Cys109. A glycan (N-linked (GlcNAc...) asparagine) is linked at Asn113. The short motif at 314-316 is the Cell attachment site element; that stretch reads RGD. N-linked (GlcNAc...) asparagine glycosylation occurs at Asn330. VWFC domains are found at residues 334–391 and 401–457; these read PACV…PVCE and AGCY…PVCE. Antistasin-like domains are found at residues 469–498, 505–532, 539–564, and 567–592; these read CGEL…TCQC, CSER…ICEC, CRPI…ICRC, and CPEL…ICKC. The N-linked (GlcNAc...) asparagine glycan is linked to Asn474. VWFC domains lie at 606–663 and 677–735; these read GTCL…PSCA and SICH…PQCT. Asn746 is a glycosylation site (N-linked (GlcNAc...) asparagine). VWFC domains lie at 751–809 and 817–874; these read NYCK…PYCI and VVCH…PMCP. Residues 940 to 960 traverse the membrane as a helical segment; the sequence is IASVVVPIIICLSIIIAFLFI. Residues 961–1036 lie on the Cytoplasmic side of the membrane; that stretch reads NQKKQWIPLL…LQADNFYQTV (76 aa). At Thr1035 the chain carries Phosphothreonine.

Interacts with BMP4 and BMP7. Post-translationally, N-glycosylated. As to expression, expressed in pancreas, kidney, skeletal muscle, lung, placenta, brain, heart, spleen, liver and small intestine. Expressed in blood vessels (at protein level).

The protein localises to the secreted. Its subcellular location is the cell membrane. May play a role in CNS development by interacting with growth factors implicated in motor neuron differentiation and survival. May play a role in capillary formation and maintenance during angiogenesis. Modulates BMP activity by affecting its processing and delivery to the cell surface. The chain is Cysteine-rich motor neuron 1 protein (CRIM1) from Homo sapiens (Human).